The primary structure comprises 354 residues: DNA polymerase IV (354 aa).

The region spanning 14 to 198 (IIHIDMDAFF…MDIAKFHGVG (185 aa)) is the UmuC domain. 2 residues coordinate Mg(2+): D18 and D116. The active site involves E117.

This sequence belongs to the DNA polymerase type-Y family. In terms of assembly, monomer. Mg(2+) is required as a cofactor.

The protein resides in the cytoplasm. It catalyses the reaction DNA(n) + a 2'-deoxyribonucleoside 5'-triphosphate = DNA(n+1) + diphosphate. Poorly processive, error-prone DNA polymerase involved in untargeted mutagenesis. Copies undamaged DNA at stalled replication forks, which arise in vivo from mismatched or misaligned primer ends. These misaligned primers can be extended by PolIV. Exhibits no 3'-5' exonuclease (proofreading) activity. May be involved in translesional synthesis, in conjunction with the beta clamp from PolIII. In Streptococcus gordonii (strain Challis / ATCC 35105 / BCRC 15272 / CH1 / DL1 / V288), this protein is DNA polymerase IV.